We begin with the raw amino-acid sequence, 464 residues long: Anthranilate synthase component 1 (464 aa).

Residues serine 41 and 236 to 238 contribute to the L-tryptophan site; that span reads PYM. Residue 271–272 participates in chorismate binding; the sequence is GT. Glutamate 298 lines the Mg(2+) pocket. Chorismate is bound by residues tyrosine 386, arginine 406, 420–422, and glycine 422; that span reads GAG. Glutamate 435 contributes to the Mg(2+) binding site.

This sequence belongs to the anthranilate synthase component I family. Heterotetramer consisting of two non-identical subunits: a beta subunit (TrpG) and a large alpha subunit (TrpE). It depends on Mg(2+) as a cofactor.

The catalysed reaction is chorismate + L-glutamine = anthranilate + pyruvate + L-glutamate + H(+). The protein operates within amino-acid biosynthesis; L-tryptophan biosynthesis; L-tryptophan from chorismate: step 1/5. Its activity is regulated as follows. Feedback inhibited by tryptophan. In terms of biological role, part of a heterotetrameric complex that catalyzes the two-step biosynthesis of anthranilate, an intermediate in the biosynthesis of L-tryptophan. In the first step, the glutamine-binding beta subunit (TrpG) of anthranilate synthase (AS) provides the glutamine amidotransferase activity which generates ammonia as a substrate that, along with chorismate, is used in the second step, catalyzed by the large alpha subunit of AS (TrpE) to produce anthranilate. In the absence of TrpG, TrpE can synthesize anthranilate directly from chorismate and high concentrations of ammonia. This chain is Anthranilate synthase component 1 (trpE), found in Methanothermobacter thermautotrophicus (strain ATCC 29096 / DSM 1053 / JCM 10044 / NBRC 100330 / Delta H) (Methanobacterium thermoautotrophicum).